The following is a 116-amino-acid chain: Non-specific lipid-transfer protein (116 aa).

The N-terminal stretch at 1 to 25 (MAKMAMMVLCAGVTCMVVGAPYTEA) is a signal peptide. 4 disulfide bridges follow: C28–C75, C38–C52, C53–C98, and C73–C112.

It belongs to the plant LTP family.

In terms of biological role, plant non-specific lipid-transfer proteins transfer phospholipids as well as galactolipids across membranes. May play a role in wax or cutin deposition in the cell walls of expanding epidermal cells and certain secretory tissues. This is Non-specific lipid-transfer protein from Helianthus annuus (Common sunflower).